Consider the following 296-residue polypeptide: Acetyl-coenzyme A carboxylase carboxyl transferase subunit beta (296 aa).

Residues 25–294 (VWTKCTSCEQ…PFVEPELISE (270 aa)) form the CoA carboxyltransferase N-terminal domain. Cys29, Cys32, Cys48, and Cys51 together coordinate Zn(2+). The segment at 29–51 (CTSCEQVLYSEELKRNLYVCPKC) adopts a C4-type zinc-finger fold.

This sequence belongs to the AccD/PCCB family. As to quaternary structure, acetyl-CoA carboxylase is a heterohexamer composed of biotin carboxyl carrier protein (AccB), biotin carboxylase (AccC) and two subunits each of ACCase subunit alpha (AccA) and ACCase subunit beta (AccD). It depends on Zn(2+) as a cofactor.

The protein resides in the cytoplasm. It catalyses the reaction N(6)-carboxybiotinyl-L-lysyl-[protein] + acetyl-CoA = N(6)-biotinyl-L-lysyl-[protein] + malonyl-CoA. The protein operates within lipid metabolism; malonyl-CoA biosynthesis; malonyl-CoA from acetyl-CoA: step 1/1. Component of the acetyl coenzyme A carboxylase (ACC) complex. Biotin carboxylase (BC) catalyzes the carboxylation of biotin on its carrier protein (BCCP) and then the CO(2) group is transferred by the transcarboxylase to acetyl-CoA to form malonyl-CoA. The polypeptide is Acetyl-coenzyme A carboxylase carboxyl transferase subunit beta (Haemophilus influenzae (strain PittEE)).